The sequence spans 123 residues: Ribosome-binding factor A (123 aa).

It belongs to the RbfA family. Monomer. Binds 30S ribosomal subunits, but not 50S ribosomal subunits or 70S ribosomes.

The protein resides in the cytoplasm. Functionally, one of several proteins that assist in the late maturation steps of the functional core of the 30S ribosomal subunit. Associates with free 30S ribosomal subunits (but not with 30S subunits that are part of 70S ribosomes or polysomes). Required for efficient processing of 16S rRNA. May interact with the 5'-terminal helix region of 16S rRNA. This Chlamydia trachomatis serovar L2 (strain ATCC VR-902B / DSM 19102 / 434/Bu) protein is Ribosome-binding factor A.